The sequence spans 246 residues: tRNA pseudouridine synthase A (246 aa).

Residue D52 is the Nucleophile of the active site. Residue Y111 participates in substrate binding.

Belongs to the tRNA pseudouridine synthase TruA family. Homodimer.

The catalysed reaction is uridine(38/39/40) in tRNA = pseudouridine(38/39/40) in tRNA. In terms of biological role, formation of pseudouridine at positions 38, 39 and 40 in the anticodon stem and loop of transfer RNAs. The sequence is that of tRNA pseudouridine synthase A from Borrelia garinii subsp. bavariensis (strain ATCC BAA-2496 / DSM 23469 / PBi) (Borreliella bavariensis).